The chain runs to 502 residues: Solute carrier family 2, facilitated glucose transporter member 5 (502 aa).

An N-acetylmethionine modification is found at methionine 1. Residues 1 to 17 (MEKEDQEKTGKLTLVLA) are Cytoplasmic-facing. A helical transmembrane segment spans residues 18-38 (LATFLAAFGSSFQYGYNVAAV). Residue tyrosine 31 participates in D-fructose binding. The Extracellular portion of the chain corresponds to 39–67 (NSPSEFMQQFYNDTYYDRNKENIESFTLT). N-linked (GlcNAc...) asparagine glycosylation is present at asparagine 50. The helical transmembrane segment at 68–90 (LLWSLTVSMFPFGGFIGSLMVGF) threads the bilayer. Residues 91-97 (LVNNLGR) lie on the Cytoplasmic side of the membrane. Residues 98 to 118 (KGALLFNNIFSILPAILMGCS) form a helical membrane-spanning segment. The Extracellular segment spans residues 119 to 125 (KIAKSFE). The chain crosses the membrane as a helical span at residues 126 to 148 (IIIASRLLVGICAGISSNVVPMY). Residues 149–160 (LGELAPKNLRGA) lie on the Cytoplasmic side of the membrane. A helical transmembrane segment spans residues 161–181 (LGVVPQLFITVGILVAQLFGL). Glutamine 166 contacts D-fructose. The Extracellular portion of the chain corresponds to 182-191 (RSVLASEEGW). A helical transmembrane segment spans residues 192–212 (PILLGLTGVPAGLQLLLLPFF). The Cytoplasmic portion of the chain corresponds to 213–276 (PESPRYLLIQ…LFRMQSLRWQ (64 aa)). Residues 277–297 (LISTIVLMAGQQLSGVNAIYY) form a helical membrane-spanning segment. D-fructose is bound by residues glutamine 287 and 295–297 (IYY). The Extracellular portion of the chain corresponds to 298–312 (YADQIYLSAGVKSND). The chain crosses the membrane as a helical span at residues 313–333 (VQYVTAGTGAVNVFMTMVTVF). Over 334–341 (VVELWGRR) the chain is Cytoplasmic. A helical membrane pass occupies residues 342–362 (NLLLIGFSTCLTACIVLTVAL). Over 363 to 370 (ALQNTISW) the chain is Extracellular. The chain crosses the membrane as a helical span at residues 371–393 (MPYVSIVCVIVYVIGHAVGPSPI). D-fructose is bound at residue histidine 386. Over 394-411 (PALFITEIFLQSSRPSAY) the chain is Cytoplasmic. Residues 412 to 432 (MIGGSVHWLSNFIVGLIFPFI) traverse the membrane as a helical segment. 418–419 (HW) is a binding site for D-fructose. Residues 433–438 (QVGLGP) lie on the Extracellular side of the membrane. A helical transmembrane segment spans residues 439–459 (YSFIIFAIICLLTTIYIFMVV). The Cytoplasmic portion of the chain corresponds to 460-502 (PETKGRTFVEINQIFAKKNKVSDVYPEKEEKELNDLPPATREQ).

Belongs to the major facilitator superfamily. Sugar transporter (TC 2.A.1.1) family. Glucose transporter subfamily. As to expression, detected in jejunum. Detected in kidney, skeletal muscle, brain and adipose tissue (at protein level). Detected in small intestine and in kidney, and at much lower levels in brain. Detected in enterocytes in duodenum, jejunum, and ileum.

It localises to the apical cell membrane. It is found in the cell membrane. The protein resides in the sarcolemma. It carries out the reaction D-fructose(out) = D-fructose(in). Its activity is regulated as follows. Fructose uptake is inhibited by mercury ions. Fructose uptake is only slightly inhibited by cytochalasin B. Its function is as follows. Functions as a fructose transporter that has only low activity with other monosaccharides. Can mediate the uptake of deoxyglucose, but with low efficiency. Essential for fructose uptake in the small intestine. Plays a role in the regulation of salt uptake and blood pressure in response to dietary fructose. Required for the development of high blood pressure in response to high dietary fructose intake. The polypeptide is Solute carrier family 2, facilitated glucose transporter member 5 (Rattus norvegicus (Rat)).